The chain runs to 200 residues: Dephospho-CoA kinase (200 aa).

One can recognise a DPCK domain in the interval 2 to 200; it reads LIAVVGKAGV…CHHGHYQTPK (199 aa). An ATP-binding site is contributed by 10–15; the sequence is GVGKTT.

Belongs to the CoaE family.

It localises to the cytoplasm. The catalysed reaction is 3'-dephospho-CoA + ATP = ADP + CoA + H(+). Its pathway is cofactor biosynthesis; coenzyme A biosynthesis; CoA from (R)-pantothenate: step 5/5. Functionally, catalyzes the phosphorylation of the 3'-hydroxyl group of dephosphocoenzyme A to form coenzyme A. This chain is Dephospho-CoA kinase, found in Mycoplasma pneumoniae (strain ATCC 29342 / M129 / Subtype 1) (Mycoplasmoides pneumoniae).